The chain runs to 67 residues: UPF0434 protein Lcho_2556 (67 aa).

The protein belongs to the UPF0434 family.

In Leptothrix cholodnii (strain ATCC 51168 / LMG 8142 / SP-6) (Leptothrix discophora (strain SP-6)), this protein is UPF0434 protein Lcho_2556.